The primary structure comprises 132 residues: Phosphoribosyl-AMP cyclohydrolase (132 aa).

Aspartate 89 provides a ligand contact to Mg(2+). Residue cysteine 90 coordinates Zn(2+). Mg(2+) contacts are provided by aspartate 91 and aspartate 93. Zn(2+) is bound by residues cysteine 106 and cysteine 113.

It belongs to the PRA-CH family. Homodimer. It depends on Mg(2+) as a cofactor. Zn(2+) serves as cofactor.

It is found in the cytoplasm. The catalysed reaction is 1-(5-phospho-beta-D-ribosyl)-5'-AMP + H2O = 1-(5-phospho-beta-D-ribosyl)-5-[(5-phospho-beta-D-ribosylamino)methylideneamino]imidazole-4-carboxamide. Its pathway is amino-acid biosynthesis; L-histidine biosynthesis; L-histidine from 5-phospho-alpha-D-ribose 1-diphosphate: step 3/9. Functionally, catalyzes the hydrolysis of the adenine ring of phosphoribosyl-AMP. The chain is Phosphoribosyl-AMP cyclohydrolase from Renibacterium salmoninarum (strain ATCC 33209 / DSM 20767 / JCM 11484 / NBRC 15589 / NCIMB 2235).